A 455-amino-acid chain; its full sequence is Bifunctional protein GlmU (455 aa).

The segment at 1-226 (MSLDIVILAA…AMEVQGANDR (226 aa)) is pyrophosphorylase. Residues 8-11 (LAAG), Lys-22, Gln-73, 78-79 (GT), 99-101 (YGD), Gly-136, Glu-151, Asn-166, and Asn-224 each bind UDP-N-acetyl-alpha-D-glucosamine. Asp-101 contributes to the Mg(2+) binding site. Asn-224 is a binding site for Mg(2+). The interval 227 to 247 (KQLSELERHYQLREARRLMAG) is linker. Positions 248-455 (GVTLRDPARF…WKRPVKIRKD (208 aa)) are N-acetyltransferase. The UDP-N-acetyl-alpha-D-glucosamine site is built by Arg-330 and Lys-348. The active-site Proton acceptor is His-360. UDP-N-acetyl-alpha-D-glucosamine-binding residues include Tyr-363 and Asn-374. Residues Ala-377, 383–384 (NY), Ser-402, Ala-420, and Arg-437 contribute to the acetyl-CoA site.

In the N-terminal section; belongs to the N-acetylglucosamine-1-phosphate uridyltransferase family. This sequence in the C-terminal section; belongs to the transferase hexapeptide repeat family. As to quaternary structure, homotrimer. It depends on Mg(2+) as a cofactor.

The protein resides in the cytoplasm. It carries out the reaction alpha-D-glucosamine 1-phosphate + acetyl-CoA = N-acetyl-alpha-D-glucosamine 1-phosphate + CoA + H(+). It catalyses the reaction N-acetyl-alpha-D-glucosamine 1-phosphate + UTP + H(+) = UDP-N-acetyl-alpha-D-glucosamine + diphosphate. Its pathway is nucleotide-sugar biosynthesis; UDP-N-acetyl-alpha-D-glucosamine biosynthesis; N-acetyl-alpha-D-glucosamine 1-phosphate from alpha-D-glucosamine 6-phosphate (route II): step 2/2. It functions in the pathway nucleotide-sugar biosynthesis; UDP-N-acetyl-alpha-D-glucosamine biosynthesis; UDP-N-acetyl-alpha-D-glucosamine from N-acetyl-alpha-D-glucosamine 1-phosphate: step 1/1. The protein operates within bacterial outer membrane biogenesis; LPS lipid A biosynthesis. In terms of biological role, catalyzes the last two sequential reactions in the de novo biosynthetic pathway for UDP-N-acetylglucosamine (UDP-GlcNAc). The C-terminal domain catalyzes the transfer of acetyl group from acetyl coenzyme A to glucosamine-1-phosphate (GlcN-1-P) to produce N-acetylglucosamine-1-phosphate (GlcNAc-1-P), which is converted into UDP-GlcNAc by the transfer of uridine 5-monophosphate (from uridine 5-triphosphate), a reaction catalyzed by the N-terminal domain. The sequence is that of Bifunctional protein GlmU from Pseudomonas savastanoi pv. phaseolicola (strain 1448A / Race 6) (Pseudomonas syringae pv. phaseolicola (strain 1448A / Race 6)).